Here is a 404-residue protein sequence, read N- to C-terminus: G1/S-specific cyclin-E2 (404 aa).

The tract at residues 1 to 41 (MSRRSSRLQAKQHAQPNQPDSPQETQIIQAKKRKTAQDVKK) is disordered. Residues 7 to 28 (RLQAKQHAQPNQPDSPQETQII) are compositionally biased toward polar residues. Residue serine 21 is modified to Phosphoserine. Lysine 348 is modified (N6-lactoyllysine). Serine 383 carries the phosphoserine modification. Phosphothreonine is present on threonine 392.

The protein belongs to the cyclin family. Cyclin E subfamily. In terms of assembly, interacts with the CDK2 (in vivo) and CDK3 (in vitro) protein kinases to form a serine/threonine kinase holoenzyme complex. The cyclin subunit imparts substrate specificity to the complex. In terms of processing, phosphorylation by CDK2 triggers its release from CDK2 and degradation via the ubiquitin proteasome pathway. Post-translationally, lactylated at Lys-348. Delactylated by SIRT3. As to expression, highest levels in adult testis, thymus and brain. Lower levels in placenta, spleen and colon.

The protein localises to the nucleus. Functionally, essential for the control of the cell cycle at the late G1 and early S phase. In Mus musculus (Mouse), this protein is G1/S-specific cyclin-E2 (Ccne2).